Consider the following 382-residue polypeptide: Proton extrusion protein PxcA (382 aa).

4 helical membrane passes run 162–182 (ILLLLVLVPLLVQQVSNTYIV), 257–277 (AIKNVLADLAGLMAFVVVCLV), 305–325 (IILFTDIFVGYHSPEGWTVLL), and 340–360 (FILLFIATFPVILATIFKYWI).

The protein belongs to the CemA family.

It is found in the cell inner membrane. Functionally, required for H(+) efflux immediately after light irradiation to form a rapid H(+) concentration gradient across the thylakoid membranes. Together with PxcL, contributes to transient H(+) uptake following dark to light transition. This Parasynechococcus marenigrum (strain WH8102) protein is Proton extrusion protein PxcA.